The primary structure comprises 544 residues: CTP synthase (544 aa).

The segment at 1-266 is amidoligase domain; it reads MTKFIFVTGG…DDLICERFGL (266 aa). CTP is bound at residue Ser-13. Residue Ser-13 participates in UTP binding. Residues 14–19 and Asp-71 each bind ATP; that span reads SLGKGI. Mg(2+) is bound by residues Asp-71 and Glu-140. Residues 147 to 149, 187 to 192, and Lys-223 each bind CTP; these read DIE and KTKPTQ. UTP-binding positions include 187-192 and Lys-223; that span reads KTKPTQ. Residues 291–543 form the Glutamine amidotransferase type-1 domain; that stretch reads TVAMVGKYVE…VKAAKNYSEA (253 aa). Gly-354 is a binding site for L-glutamine. Catalysis depends on Cys-381, which acts as the Nucleophile; for glutamine hydrolysis. Residues 382–385, Glu-404, and Arg-471 each bind L-glutamine; that span reads LGMQ. Residues His-516 and Glu-518 contribute to the active site.

This sequence belongs to the CTP synthase family. In terms of assembly, homotetramer.

The enzyme catalyses UTP + L-glutamine + ATP + H2O = CTP + L-glutamate + ADP + phosphate + 2 H(+). It carries out the reaction L-glutamine + H2O = L-glutamate + NH4(+). It catalyses the reaction UTP + NH4(+) + ATP = CTP + ADP + phosphate + 2 H(+). Its pathway is pyrimidine metabolism; CTP biosynthesis via de novo pathway; CTP from UDP: step 2/2. Allosterically activated by GTP, when glutamine is the substrate; GTP has no effect on the reaction when ammonia is the substrate. The allosteric effector GTP functions by stabilizing the protein conformation that binds the tetrahedral intermediate(s) formed during glutamine hydrolysis. Inhibited by the product CTP, via allosteric rather than competitive inhibition. In terms of biological role, catalyzes the ATP-dependent amination of UTP to CTP with either L-glutamine or ammonia as the source of nitrogen. Regulates intracellular CTP levels through interactions with the four ribonucleotide triphosphates. In Psychrobacter cryohalolentis (strain ATCC BAA-1226 / DSM 17306 / VKM B-2378 / K5), this protein is CTP synthase.